The following is a 554-amino-acid chain: Phenylalanine--tRNA ligase beta subunit (554 aa).

The B5 domain maps to leucine 276–glycine 351. 4 residues coordinate Mg(2+): aspartate 329, aspartate 335, glutamate 338, and glutamate 339.

It belongs to the phenylalanyl-tRNA synthetase beta subunit family. Type 2 subfamily. Tetramer of two alpha and two beta subunits. Requires Mg(2+) as cofactor.

The protein localises to the cytoplasm. It catalyses the reaction tRNA(Phe) + L-phenylalanine + ATP = L-phenylalanyl-tRNA(Phe) + AMP + diphosphate + H(+). This Methanococcus maripaludis (strain C6 / ATCC BAA-1332) protein is Phenylalanine--tRNA ligase beta subunit.